A 676-amino-acid polypeptide reads, in one-letter code: GRB2-associated-binding protein 2 (676 aa).

Serine 2 bears the Phosphoserine mark. Residues 6-117 form the PH domain; the sequence is DVVCTGWLRK…WVQSICQICG (112 aa). The interval 127–178 is disordered; sequence SLRNVSSAGHGPRSSPAELSSSSQHLLRERKSSAPSHSSQPTLFTFEPPVSN. Serine 133, serine 140, serine 141, serine 148, serine 149, serine 159, serine 164, serine 210, serine 218, serine 223, and serine 264 each carry phosphoserine. Low complexity predominate over residues 140–149; it reads SSPAELSSSS. Positions 159-169 are enriched in polar residues; the sequence is SAPSHSSQPTL. Threonine 265 is modified (phosphothreonine). A Phosphotyrosine modification is found at tyrosine 266. Phosphothreonine is present on threonine 278. 2 positions are modified to phosphoserine: serine 281 and serine 285. Threonine 287 carries the post-translational modification Phosphothreonine. Residue tyrosine 293 is modified to Phosphotyrosine. Threonine 331 carries the post-translational modification Phosphothreonine. The segment at 341-430 is disordered; that stretch reads VATPGDSAIA…RSAESMSDGV (90 aa). The SH3-binding signature appears at 351–358; that stretch reads PPPRPPKP. Serine 368 carries the phosphoserine modification. Phosphothreonine is present on residues threonine 385 and threonine 391. The residue at position 405 (serine 405) is a Phosphoserine. At threonine 408 the chain carries Phosphothreonine. Phosphoserine is present on residues serine 422 and serine 425. A Phosphotyrosine modification is found at tyrosine 452. Serine 480 is modified (phosphoserine). The tract at residues 492–531 is disordered; the sequence is PSTTLPVHRGPSRGSEIQPPPVNRNLKPDRKAKPTPLDLR. The SH3-binding motif lies at 510–519; sequence PPPVNRNLKP. Serine 543 bears the Phosphoserine mark. Polar residues-rich tracts occupy residues 556–577 and 589–611; these read FNSSSSQYCRPISTQSITSTDS and NPVSASPVPSGTNSPAPKKSTGS. Disordered regions lie at residues 556 to 643 and 656 to 676; these read FNSS…KVDY and NTMQEWTDVRQSSEPSKGAKL. Residues serine 622 and serine 623 each carry the phosphoserine modification. Phosphotyrosine is present on tyrosine 643. The segment covering 656-670 has biased composition (polar residues); it reads NTMQEWTDVRQSSEP.

It belongs to the GAB family. As to quaternary structure, part of a complex composed of EEIG1, TNFRSF11A/RANK, PLCG2, GAB2, TEC and BTK; complex formation increases in the presence of TNFSF11/RANKL. Interacts with SHC1; may mediate interaction with receptors. Interacts with SYK. Interacts with PI-3 kinase. Interacts with GRB2 (via SH3 2 domain). Interacts (phosphorylated) with PTPN11. Interacts with TNFRSF11A (via cytoplasmic domain). Interacts (phosphorylated) with 14-3-3 family proteins SFN, YWHAB, YWHAE, YWHAG, YWHAH, YWHAQ and YWHAZ; prevents interaction with GRB2 and attenuates GAB2 signaling. Interacts with HCK. Post-translationally, phosphorylated on tyrosine residue(s) by the thrombopoietin receptor (TPOR), stem cell factor receptor (SCFR), and T-cell and B-cell antigen receptors, gp130, IL-2R and IL-3R. Phosphorylated upon stimulation of TNFRSF11A/RANK by TNFSF11/RANKL. Phosphorylated upon EGF stimulation. Phosphorylated on tyrosine residues by HCK upon IL6 signaling. In terms of processing, dephosphorylated by PTPN11.

The protein resides in the cytoplasm. The protein localises to the cell membrane. It is found in the membrane raft. In terms of biological role, adapter protein which acts downstream of several membrane receptors including cytokine, antigen, hormone, cell matrix and growth factor receptors to regulate multiple signaling pathways. Regulates osteoclast differentiation mediating the TNFRSF11A/RANK signaling. In allergic response, it plays a role in mast cells activation and degranulation through PI-3-kinase regulation. Also involved in the regulation of cell proliferation and hematopoiesis. This Homo sapiens (Human) protein is GRB2-associated-binding protein 2 (GAB2).